A 210-amino-acid polypeptide reads, in one-letter code: Meiotic coiled-coil protein 7 (210 aa).

A coiled-coil region spans residues 77–148; it reads KRSRESVLGS…LKTQLSNLNH (72 aa).

The protein belongs to the MND1 family. Interacts with meu13.

It is found in the cytoplasm. The protein resides in the nucleus. Required for meiotic recombination. In Schizosaccharomyces pombe (strain 972 / ATCC 24843) (Fission yeast), this protein is Meiotic coiled-coil protein 7 (mcp7).